A 132-amino-acid chain; its full sequence is L-ectoine synthase (132 aa).

It belongs to the ectoine synthase family.

The catalysed reaction is (2S)-4-acetamido-2-aminobutanoate = L-ectoine + H2O. It functions in the pathway amine and polyamine biosynthesis; ectoine biosynthesis; L-ectoine from L-aspartate 4-semialdehyde: step 3/3. Its function is as follows. Catalyzes the circularization of gamma-N-acetyl-alpha,gamma-diaminobutyric acid (ADABA) to ectoine (1,4,5,6-tetrahydro-2-methyl-4-pyrimidine carboxylic acid), which is an excellent osmoprotectant. The sequence is that of L-ectoine synthase from Rhodococcus erythropolis (strain PR4 / NBRC 100887).